The sequence spans 507 residues: Fatty acid resistance protein FarB (507 aa).

The next 14 membrane-spanning stretches (helical) occupy residues 8–28 (GAAL…EVLD), 52–72 (WVIT…GFLA), 78–98 (VKLF…CGIA), 109–129 (ILQG…LMAS), 136–156 (MLAL…GPIL), 164–184 (WHWG…AWIT), 199–219 (PTDY…QMML), 233–253 (IITL…WELG), 274–294 (IATS…PLVL), 303–323 (AWAG…SPLI), 334–354 (LLVT…TDFY), 363–383 (IWPQ…LTTI), 399–419 (LSNF…STLW), and 478–498 (IFLA…LAKP).

The protein belongs to the major facilitator superfamily. EmrB family. As to quaternary structure, probably part of a tripartite efflux system FarAB-MtrE, which is composed of an inner membrane transporter, FarB, a periplasmic membrane fusion protein, FarA, and an outer membrane component, MtrE.

Its subcellular location is the cell inner membrane. Mediates resistance to long-chained antibacterial fatty acids (FAs). Function is dependent on the MtrE outer membrane protein. The protein is Fatty acid resistance protein FarB of Neisseria gonorrhoeae.